Consider the following 391-residue polypeptide: Pyruvate dehydrogenase E1 component subunit alpha, testis-specific form, mitochondrial (391 aa).

The transit peptide at 1 to 30 (MRKMLATVLSQVFSGMVQKPALRGLLSSLK) directs the protein to the mitochondrion. Positions 93, 119, 120, 158, 166, 168, 197, 198, 199, 226, and 228 each coordinate pyruvate. Residues Tyr-119 and Arg-120 each coordinate thiamine diphosphate. Positions 166, 168, 197, 198, 199, and 226 each coordinate thiamine diphosphate. Residue Asp-197 coordinates Mg(2+). Mg(2+)-binding residues include Asn-226 and Tyr-228. His-293 is a binding site for thiamine diphosphate. Phosphoserine is present on residues Ser-294 and Ser-296. The residue at position 301 (Ser-301) is a Phosphoserine; by PDK3.

In terms of assembly, heterotetramer of two PDHA2 and two PDHB subunits. The heterotetramer interacts with DLAT, and is part of the multimeric pyruvate dehydrogenase complex that contains multiple copies of pyruvate dehydrogenase (E1), dihydrolipoamide acetyltransferase (DLAT, E2) and lipoamide dehydrogenase (DLD, E3). These subunits are bound to an inner core composed of about 48 DLAT and 12 PDHX molecules. It depends on thiamine diphosphate as a cofactor. Mg(2+) is required as a cofactor. Testis.

It is found in the mitochondrion matrix. It carries out the reaction N(6)-[(R)-lipoyl]-L-lysyl-[protein] + pyruvate + H(+) = N(6)-[(R)-S(8)-acetyldihydrolipoyl]-L-lysyl-[protein] + CO2. Pyruvate dehydrogenase activity is inhibited by phosphorylation of PDHA2; it is reactivated by dephosphorylation. Its function is as follows. The pyruvate dehydrogenase complex catalyzes the overall conversion of pyruvate to acetyl-CoA and CO(2), and thereby links the glycolytic pathway to the tricarboxylic cycle. The chain is Pyruvate dehydrogenase E1 component subunit alpha, testis-specific form, mitochondrial (Pdha2) from Rattus norvegicus (Rat).